The primary structure comprises 101 residues: Gamma-secretase subunit PEN-2 (101 aa).

The Cytoplasmic portion of the chain corresponds to 1–17; sequence MNLERIPNEEKLSLCRR. An intramembrane region (helical) is located at residues 18 to 36; sequence YYLGGFAFLPFLWLVNILW. The Cytoplasmic segment spans residues 37–57; sequence FFKEAFLKPAYTEQPQIKSYV. Residues 58-78 form a helical membrane-spanning segment; that stretch reads KKSALGLLLWVAVLTTWITVF. Residues 79-101 lie on the Lumenal side of the membrane; that stretch reads QHFRAQWGEVGDYLSFTIPLGTA.

It belongs to the PEN-2 family. The functional gamma-secretase complex is composed of at least four polypeptides: a presenilin homodimer (psen1 or psen2), nicastrin (ncstn), aph1 (aph1a or aph1b) and psenen.

It localises to the endoplasmic reticulum membrane. It is found in the golgi apparatus. The protein localises to the golgi stack membrane. Its subcellular location is the cell membrane. The protein resides in the membrane. Functionally, essential subunit of the gamma-secretase complex, an endoprotease complex that catalyzes the intramembrane cleavage of integral membrane proteins such as Notch receptors and APP (amyloid-beta precursor protein). The gamma-secretase complex plays a role in Notch and Wnt signaling cascades and regulation of downstream processes via its role in processing key regulatory proteins. This chain is Gamma-secretase subunit PEN-2 (psenen), found in Danio rerio (Zebrafish).